Consider the following 359-residue polypeptide: Ornithine cyclodeaminase (359 aa).

Arg53 and Lys77 together coordinate L-ornithine. NAD(+)-binding positions include Thr92, Arg120, Ala147–Gln148, Asp169, Thr209, Val232–Asp235, Lys239, and Ser300. An L-ornithine-binding site is contributed by Arg120. L-ornithine is bound at residue Asp235. Catalysis depends on Asp235, which acts as the Proton donor/acceptor. Residue Val301 participates in L-ornithine binding.

Belongs to the ornithine cyclodeaminase/mu-crystallin family. Requires NAD(+) as cofactor.

The catalysed reaction is L-ornithine = L-proline + NH4(+). It functions in the pathway amino-acid biosynthesis; L-proline biosynthesis; L-proline from L-ornithine: step 1/1. Its function is as follows. Catalyzes the conversion of L-ornithine into L-proline with release of ammonia. The chain is Ornithine cyclodeaminase from Brucella melitensis biotype 1 (strain ATCC 23456 / CCUG 17765 / NCTC 10094 / 16M).